We begin with the raw amino-acid sequence, 92 residues long: Small ribosomal subunit protein uS19 (92 aa).

It belongs to the universal ribosomal protein uS19 family.

Functionally, protein S19 forms a complex with S13 that binds strongly to the 16S ribosomal RNA. This Acidovorax sp. (strain JS42) protein is Small ribosomal subunit protein uS19.